Consider the following 240-residue polypeptide: MTGSHDSDLAREKLIVALDYWNIEDARKLVRDLGDGVSFYKVGLGLQLVGGNEFARELIAEGKRVFLDYKYYDIEETVQRAVAQAAELKIAFLTVHGVTSIMKAAVAGRGNSDMKILGVTVLTSMDAEDIKEMGFECSVEDLVVARARRALEVGVDGVVASALEAAELRKHTNNKLMIVSPGIRPSGGARHDQKRVATPFEAMRAGADYLVLGRPIYAADNPKAAAQAIIREMADALRPD.

Substrate contacts are provided by residues aspartate 19, lysine 41, 68–77, threonine 123, arginine 184, glutamine 193, glycine 213, and arginine 214; that span reads DYKYYDIEET. Residue lysine 70 is the Proton donor of the active site.

It belongs to the OMP decarboxylase family. Type 1 subfamily. In terms of assembly, homodimer.

The catalysed reaction is orotidine 5'-phosphate + H(+) = UMP + CO2. The protein operates within pyrimidine metabolism; UMP biosynthesis via de novo pathway; UMP from orotate: step 2/2. Catalyzes the decarboxylation of orotidine 5'-monophosphate (OMP) to uridine 5'-monophosphate (UMP). The protein is Orotidine 5'-phosphate decarboxylase of Nitrobacter winogradskyi (strain ATCC 25391 / DSM 10237 / CIP 104748 / NCIMB 11846 / Nb-255).